The following is a 62-amino-acid chain: [Ser6, Val10, Asp11]-phyllokinin (62 aa).

Residues 1–22 (MSFLKKSLLLVLFLGLVSFSIC) form the signal peptide. The propeptide occupies 23-51 (EEEKRETEEEENEDDMDEESEEKKRESPD). Residues 24–62 (EEKRETEEEENEDDMDEESEEKKRESPDRPPGFSPFRVD) are disordered. A compositionally biased stretch (acidic residues) spans 30–42 (EEEENEDDMDEES).

This sequence belongs to the frog skin active peptide (FSAP) family. Bradykinin-related peptide subfamily. As to expression, expressed by the skin glands.

It localises to the secreted. In terms of biological role, induces relaxation of rat smooth muscle from tail artery and contraction of that from ileum, urinary bladder and uterus. Binds to both bradykinin receptor B1 (BDKRB1) and B2 (BDKRB2). The protein is [Ser6, Val10, Asp11]-phyllokinin of Agalychnis spurrelli (Gliding leaf frog).